The following is a 522-amino-acid chain: Peptide methionine sulfoxide reductase MsrA/MsrB (522 aa).

The 158-residue stretch at 17 to 174 folds into the Thioredoxin domain; that stretch reads LALGACSPKI…ALALIRDPNA (158 aa). A disulfide bridge links Cys-68 with Cys-71. Residues 199–354 form a peptide methionine sulfoxide reductase A region; it reads RTIYLAGGCF…PNGYCHIDIR (156 aa). Residue Cys-207 is part of the active site. Positions 383–506 constitute a MsrB domain; sequence DAELKRTLTE…NGASLKFIPL (124 aa). Cys-440 and Cys-495 are disulfide-bonded. Cys-495 serves as the catalytic Nucleophile.

This sequence in the N-terminal section; belongs to the thioredoxin family. It in the central section; belongs to the MsrA Met sulfoxide reductase family. In the C-terminal section; belongs to the MsrB Met sulfoxide reductase family.

It carries out the reaction L-methionyl-[protein] + [thioredoxin]-disulfide + H2O = L-methionyl-(S)-S-oxide-[protein] + [thioredoxin]-dithiol. The enzyme catalyses [thioredoxin]-disulfide + L-methionine + H2O = L-methionine (S)-S-oxide + [thioredoxin]-dithiol. The catalysed reaction is L-methionyl-[protein] + [thioredoxin]-disulfide + H2O = L-methionyl-(R)-S-oxide-[protein] + [thioredoxin]-dithiol. Functionally, has an important function as a repair enzyme for proteins that have been inactivated by oxidation. Catalyzes the reversible oxidation-reduction of methionine sulfoxide in proteins to methionine. This is Peptide methionine sulfoxide reductase MsrA/MsrB (msrAB) from Neisseria meningitidis serogroup B (strain ATCC BAA-335 / MC58).